Consider the following 389-residue polypeptide: Trans-2-enoyl-CoA reductase [NADH] (389 aa).

NAD(+) is bound by residues 47 to 52, 73 to 74, 110 to 111, and 138 to 139; these read GASTGY, FE, DA, and LA. Tyr-224 contacts substrate. The active-site Proton donor is Tyr-234. NAD(+)-binding positions include Lys-243 and 272-274; that span reads LVT.

It belongs to the TER reductase family. As to quaternary structure, monomer.

It catalyses the reaction a 2,3-saturated acyl-CoA + NAD(+) = a (2E)-enoyl-CoA + NADH + H(+). The protein operates within lipid metabolism; fatty acid biosynthesis. Involved in the fatty acid synthesis (FAS II). Catalyzes the reduction of a carbon-carbon double bond in an enoyl moiety that is covalently linked to a coenzyme A (CoA). The protein is Trans-2-enoyl-CoA reductase [NADH] of Clostridium perfringens (strain SM101 / Type A).